The chain runs to 391 residues: Somatostatin receptor type 1 (391 aa).

Residues 1 to 50 (MFPNGTAPSPTSSPSSSPGGCGEGVCSRGPGSGAADGMEEPGRNSSQNGT) are disordered. The Extracellular segment spans residues 1 to 56 (MFPNGTAPSPTSSPSSSPGGCGEGVCSRGPGSGAADGMEEPGRNSSQNGTLSEGQG). The N-linked (GlcNAc...) asparagine glycan is linked to Asn4. The segment covering 8-18 (PSPTSSPSSSP) has biased composition (low complexity). 2 N-linked (GlcNAc...) asparagine glycosylation sites follow: Asn44 and Asn48. The chain crosses the membrane as a helical span at residues 57-84 (SAILISFIYSVVCLVGLCGNSMVIYVIL). Topologically, residues 85 to 94 (RYAKMKTATN) are cytoplasmic. The helical transmembrane segment at 95-120 (IYILNLAIADELLMLSVPFLVTSTLL) threads the bilayer. Topologically, residues 121 to 131 (RHWPFGALLCR) are extracellular. Cys130 and Cys208 are oxidised to a cystine. A helical membrane pass occupies residues 132 to 153 (LVLSVDAVNMFTSIYCLTVLSV). Residues 154 to 175 (DRYVAVVHPIKAARYRRPTVAK) are Cytoplasmic-facing. A helical transmembrane segment spans residues 176–196 (VVNLGVWVLSLLVILPIVVFS). Topologically, residues 197 to 219 (RTAANSDGTVACNMLMPEPAQRW) are extracellular. A helical transmembrane segment spans residues 220-244 (LVGFVLYTFLMGFLLPVGAICLCYV). At 245-270 (LIIAKMRMVALKAGWQQRKRSERKIT) the chain is on the cytoplasmic side. The chain crosses the membrane as a helical span at residues 271 to 296 (LMVMMVVMVFVICWMPFYVVQLVNVF). Topologically, residues 297 to 303 (AEQDDAT) are extracellular. Residues 304–327 (VSQLSVILGYANSCANPILYGFLS) traverse the membrane as a helical segment. Topologically, residues 328–391 (DNFKRSFQRI…GTCASRISTL (64 aa)) are cytoplasmic. The S-palmitoyl cysteine moiety is linked to residue Cys339.

Belongs to the G-protein coupled receptor 1 family. Brain, pituitary, islet, jejunum, stomach, heart, spleen.

The protein resides in the cell membrane. Receptor for somatostatin with higher affinity for somatostatin-14 than -28. This receptor is coupled to phosphotyrosine phosphatase and Na(+)/H(+) exchanger via pertussis toxin insensitive G proteins. The polypeptide is Somatostatin receptor type 1 (Sstr1) (Rattus norvegicus (Rat)).